Consider the following 101-residue polypeptide: Ubiquitin-like protein SMT3 (101 aa).

Serine 2 bears the N-acetylserine mark. Phosphoserine occurs at positions 2 and 4. Positions 22–98 constitute a Ubiquitin-like domain; that stretch reads THINLKVSDG…IEAHREQIGG (77 aa). A Glycyl lysine isopeptide (Gly-Lys) (interchain with K-? in acceptor proteins) cross-link involves residue glycine 98. A propeptide spanning residues 99–101 is cleaved from the precursor; sequence ATY.

This sequence belongs to the ubiquitin family. SUMO subfamily. In terms of assembly, activated by a E1 ligase composed of AOS1 and UBA2.

Its function is as follows. Not known; suppressor of MIF2 mutations. This Saccharomyces cerevisiae (strain ATCC 204508 / S288c) (Baker's yeast) protein is Ubiquitin-like protein SMT3 (SMT3).